A 291-amino-acid polypeptide reads, in one-letter code: Ecto-ADP-ribosyltransferase 5 (291 aa).

The first 22 residues, 1-22 (MALAALMIALGSLGLHTWQAQA), serve as a signal peptide directing secretion. A disulfide bridge links Cys-42 with Cys-258. One can recognise a TR mART core domain in the interval 62–252 (ALLRESWEAA…LVTLWSYNQT (191 aa)). Tyr-99 lines the NAD(+) pocket. Residue Asn-101 is glycosylated (N-linked (GlcNAc...) asparagine). Residues Arg-160 and Gln-180 each contribute to the NAD(+) site. The active site involves Arg-160. Residue Ser-183 is part of the active site. N-linked (GlcNAc...) asparagine glycosylation is present at Asn-196. An NAD(+)-binding site is contributed by Ser-214. Residue Glu-221 is part of the active site. A glycan (N-linked (GlcNAc...) asparagine) is linked at Asn-250.

It belongs to the Arg-specific ADP-ribosyltransferase family.

It is found in the secreted. The enzyme catalyses L-arginyl-[protein] + NAD(+) = N(omega)-(ADP-D-ribosyl)-L-arginyl-[protein] + nicotinamide + H(+). The polypeptide is Ecto-ADP-ribosyltransferase 5 (ART5) (Homo sapiens (Human)).